We begin with the raw amino-acid sequence, 149 residues long: Succinate dehydrogenase assembly factor 2, mitochondrial (149 aa).

Belongs to the SDHAF2 family. Interacts with the flavoprotein subunit within the SDH catalytic dimer.

The protein localises to the mitochondrion matrix. Functionally, plays an essential role in the assembly of succinate dehydrogenase (SDH), an enzyme complex (also referred to as respiratory complex II) that is a component of both the tricarboxylic acid (TCA) cycle and the mitochondrial electron transport chain, and which couples the oxidation of succinate to fumarate with the reduction of ubiquinone (coenzyme Q) to ubiquinol. Required for flavinylation (covalent attachment of FAD) of the flavoprotein subunit of the SDH catalytic dimer. The sequence is that of Succinate dehydrogenase assembly factor 2, mitochondrial from Scheffersomyces stipitis (strain ATCC 58785 / CBS 6054 / NBRC 10063 / NRRL Y-11545) (Yeast).